The primary structure comprises 512 residues: Inositol-3-phosphate synthase (512 aa).

NAD(+) is bound by residues glycine 72, glycine 73, asparagine 74, asparagine 75, aspartate 145, isoleucine 182, glutamine 192, arginine 195, threonine 232, glycine 233, asparagine 234, threonine 235, glycine 283, serine 284, aspartate 308, serine 311, asparagine 342, asparagine 343, aspartate 344, lysine 357, glycine 395, aspartate 396, aspartate 424, and serine 425.

The protein belongs to the myo-inositol 1-phosphate synthase family. NAD(+) serves as cofactor.

The protein localises to the cytoplasm. The protein resides in the cytosol. It is found in the nucleus. The enzyme catalyses D-glucose 6-phosphate = 1D-myo-inositol 3-phosphate. It functions in the pathway polyol metabolism; myo-inositol biosynthesis; myo-inositol from D-glucose 6-phosphate: step 1/2. Key enzyme in myo-inositol biosynthesis pathway that catalyzes the conversion of glucose 6-phosphate to 1-myo-inositol 1-phosphate in a NAD-dependent manner. The chain is Inositol-3-phosphate synthase from Mesembryanthemum crystallinum (Common ice plant).